A 1059-amino-acid polypeptide reads, in one-letter code: Eukaryotic translation initiation factor 3 subunit A (1059 aa).

The stretch at 99 to 130 (AAEKVTAAQAKADEVQSSIEATTSNIDDLEAS) forms a coiled coil. One can recognise a PCI domain in the interval 337–521 (LQRAATFVIL…GVLSFDADVF (185 aa)). Residues 586-905 (EALARAKAGA…KAEKEKLAAT (320 aa)) adopt a coiled-coil conformation. Positions 794-902 (RRDEFEKRRR…ARRKAEKEKL (109 aa)) are enriched in basic and acidic residues. The segment at 794-1059 (RRDEFEKRRR…YVPKWRREGA (266 aa)) is disordered. 4 stretches are compositionally biased toward low complexity: residues 908 to 927 (AYRPPAAAERTEAAAPPRIA), 942 to 958 (KAASGETAAPAPAAAEP), 965 to 988 (AAAPPAERTEAAAPPRLALAGNRP), and 1005 to 1024 (AAAVPERSAPPLRAAAPQRA).

This sequence belongs to the eIF-3 subunit A family. Component of the eukaryotic translation initiation factor 3 (eIF-3) complex.

It localises to the cytoplasm. RNA-binding component of the eukaryotic translation initiation factor 3 (eIF-3) complex, which is involved in protein synthesis of a specialized repertoire of mRNAs and, together with other initiation factors, stimulates binding of mRNA and methionyl-tRNAi to the 40S ribosome. The eIF-3 complex specifically targets and initiates translation of a subset of mRNAs involved in cell proliferation. This is Eukaryotic translation initiation factor 3 subunit A (eif3a) from Neurospora crassa (strain ATCC 24698 / 74-OR23-1A / CBS 708.71 / DSM 1257 / FGSC 987).